The primary structure comprises 256 residues: Major prion protein (256 aa).

A signal peptide spans 1-24 (MVKSHIGSWILVLFVAMWSDVGLC). An interaction with GRB2, ERI3 and SYN1 region spans residues 25–233 (KKRPKPGGGW…ESQAYYQRGA (209 aa)). The segment at 28–110 (PKPGGGWNTG…QWNKPSKPKT (83 aa)) is disordered. 5 tandem repeats follow at residues 54-62 (PQGGGGWGQ), 63-70 (PHGGGWGQ), 71-78 (PHGGGWGQ), 79-86 (PHGGGWGQ), and 87-95 (PHGGGGWGQ). The segment at 54–95 (PQGGGGWGQPHGGGWGQPHGGGWGQPHGGGWGQPHGGGGWGQ) is 5 X 8 AA tandem repeats of P-H-G-G-G-W-G-Q. Residues 55–97 (QGGGGWGQPHGGGWGQPHGGGWGQPHGGGWGQPHGGGGWGQGG) are compositionally biased toward gly residues. Cu(2+)-binding residues include His-64, Gly-65, Gly-66, His-72, Gly-73, Gly-74, His-80, Gly-81, Gly-82, His-88, Gly-90, and Gly-91. Residues Cys-182 and Cys-217 are joined by a disulfide bond. Asn-184 and Asn-200 each carry an N-linked (GlcNAc...) asparagine glycan. A lipid anchor (GPI-anchor amidated alanine) is attached at Ala-233. Positions 234 to 256 (SVILFSSPPVILLISFLIFLIVG) are cleaved as a propeptide — removed in mature form.

This sequence belongs to the prion family. In terms of assembly, monomer and homodimer. Has a tendency to aggregate into amyloid fibrils containing a cross-beta spine, formed by a steric zipper of superposed beta-strands. Soluble oligomers may represent an intermediate stage on the path to fibril formation. Copper binding may promote oligomerization. Interacts with GRB2, APP, ERI3/PRNPIP and SYN1. Mislocalized cytosolically exposed PrP interacts with MGRN1; this interaction alters MGRN1 subcellular location and causes lysosomal enlargement. Interacts with KIAA1191.

The protein resides in the cell membrane. Its subcellular location is the golgi apparatus. Functionally, its primary physiological function is unclear. Has cytoprotective activity against internal or environmental stresses. May play a role in neuronal development and synaptic plasticity. May be required for neuronal myelin sheath maintenance. May play a role in iron uptake and iron homeostasis. Soluble oligomers are toxic to cultured neuroblastoma cells and induce apoptosis (in vitro). Association with GPC1 (via its heparan sulfate chains) targets PRNP to lipid rafts. Also provides Cu(2+) or Zn(2+) for the ascorbate-mediated GPC1 deaminase degradation of its heparan sulfate side chains. This chain is Major prion protein (PRNP), found in Ovis canadensis (Bighorn sheep).